The following is a 180-amino-acid chain: Large ribosomal subunit protein uL6 (180 aa).

Belongs to the universal ribosomal protein uL6 family. Part of the 50S ribosomal subunit.

This protein binds to the 23S rRNA, and is important in its secondary structure. It is located near the subunit interface in the base of the L7/L12 stalk, and near the tRNA binding site of the peptidyltransferase center. In Clostridium botulinum (strain Okra / Type B1), this protein is Large ribosomal subunit protein uL6.